A 595-amino-acid polypeptide reads, in one-letter code: Beta-(1--&gt;2)glucan export ATP-binding/permease protein NdvA (595 aa).

Helical transmembrane passes span 21-41 (FLLICTANITLAIITIAEPIL), 56-76 (LVTLAVWMCFGISNIIAYVLV), 129-149 (IWLEFMRQHLSTFVALFVLVP), 158-178 (LSIVLMVLAILYILIARLVMQ), and 252-272 (ISIVCVLLLGAFFVIKGQLSV). Positions 21-301 (FLLICTANIT…ISGFINLAVS (281 aa)) constitute an ABC transmembrane type-1 domain. The ABC transporter domain maps to 335–569 (IQFHHVTYEF…DGHFYKLLKR (235 aa)). 368-375 (GPTGAGKT) lines the ATP pocket.

Belongs to the ABC transporter superfamily. Beta-(1--&gt;2)glucan exporter (TC 3.A.1.108.1) family. As to quaternary structure, homodimer.

Its subcellular location is the cell inner membrane. It carries out the reaction [(1-&gt;2)-beta-D-glucosyl](n)(in) + ATP + H2O = [(1-&gt;2)-beta-D-glucosyl](n)(out) + ADP + phosphate + H(+). Involved in beta-(1--&gt;2)glucan export. Transmembrane domains (TMD) form a pore in the inner membrane and the ATP-binding domain (NBD) is responsible for energy generation. This Bartonella bacilliformis protein is Beta-(1--&gt;2)glucan export ATP-binding/permease protein NdvA.